The following is a 1704-amino-acid chain: Phospholipid-transporting ATPase ABCA3 (1704 aa).

The N-linked (GlcNAc...) asparagine glycan is linked to Asn14. A helical transmembrane segment spans residues 22 to 42 (VLVTVLELFLPLLFSGILIWL). Residues Asn53, Asn124, Asn140, and Asn228 are each glycosylated (N-linked (GlcNAc...) asparagine). The next 6 helical transmembrane spans lie at 261-283 (YQLP…RAVV), 307-327 (AWFL…TLLF), 344-364 (SLVL…SFMV), 373-393 (IAAA…FFVA), 405-425 (LLSC…IGKF), and 447-467 (FCFG…GLVT). Positions 530 to 763 (IKIKHLSKVF…YGAGYHMTLV (234 aa)) constitute an ABC transporter 1 domain. Residue 566–573 (GHNGAGKT) coordinates ATP. Residue Asn620 is glycosylated (N-linked (GlcNAc...) asparagine). The next 7 membrane-spanning stretches (helical) occupy residues 925-945 (MVAA…LAIH), 1100-1120 (IALN…ILAV), 1144-1164 (SALL…LVVF), 1183-1203 (LLLM…SFFF), 1213-1233 (LTIF…IMRI), 1245-1265 (LDHV…SNFY), and 1310-1330 (MAAS…NLLW). Asn1350 is a glycosylation site (N-linked (GlcNAc...) asparagine). In terms of domain architecture, ABC transporter 2 spans 1381–1614 (LIINELSKVY…FGSGYSLQAK (234 aa)). Residue 1416-1423 (GFNGAGKT) coordinates ATP.

This sequence belongs to the ABC transporter superfamily. ABCA family. As to quaternary structure, homooligomer; disulfide-linked. N-glycosylated. Localization at intracellular vesicles is accompanied by processing of oligosaccharide from high mannose type to complex type. N-linked glycosylation at Asn-124 and Asn-140 is required for stability and efficient anterograde trafficking and prevents from proteasomal degradation. Post-translationally, proteolytically cleaved by CTSL and to a lower extent by CTSB within multivesicular bodies (MVB) and lamellar bodies (LB) leading to a mature form of 150 kDa. In terms of tissue distribution, highly expressed in the lung and moderately expressed in the kidney, adipose, macrophage, and spleen.

The protein resides in the endosome. It localises to the multivesicular body membrane. It is found in the cytoplasmic vesicle membrane. The protein localises to the late endosome membrane. Its subcellular location is the lysosome membrane. It catalyses the reaction a 1,2-diacyl-sn-glycero-3-phospho-(1'-sn-glycerol)(in) + ATP + H2O = a 1,2-diacyl-sn-glycero-3-phospho-(1'-sn-glycerol)(out) + ADP + phosphate + H(+). The enzyme catalyses a 1,2-diacyl-sn-glycero-3-phosphocholine(in) + ATP + H2O = a 1,2-diacyl-sn-glycero-3-phosphocholine(out) + ADP + phosphate + H(+). It carries out the reaction ATP + H2O + phospholipidSide 1 = ADP + phosphate + phospholipidSide 2.. The catalysed reaction is ATP + H2O + xenobioticSide 1 = ADP + phosphate + xenobioticSide 2.. It catalyses the reaction 1,2-dihexadecanoyl-sn-glycero-3-phosphocholine(in) + ATP + H2O = 1,2-dihexadecanoyl-sn-glycero-3-phosphocholine(out) + ADP + phosphate + H(+). The enzyme catalyses cholesterol(in) + ATP + H2O = cholesterol(out) + ADP + phosphate + H(+). In terms of biological role, catalyzes the ATP-dependent transport of phospholipids such as phosphatidylcholine and phosphoglycerol from the cytoplasm into the lumen side of lamellar bodies, in turn participates in the lamellar bodies biogenesis and homeostasis of pulmonary surfactant. Transports preferentially phosphatidylcholine containing short acyl chains. In addition plays a role as an efflux transporter of miltefosine across macrophage membranes and free cholesterol (FC) through intralumenal vesicles by removing FC from the cell as a component of surfactant and protects cells from free cholesterol toxicity. This chain is Phospholipid-transporting ATPase ABCA3 (Abca3), found in Mus musculus (Mouse).